A 382-amino-acid polypeptide reads, in one-letter code: Probable dual-specificity RNA methyltransferase RlmN (382 aa).

Glu-118 functions as the Proton acceptor in the catalytic mechanism. Residues 124-370 (YDKRVTMCIS…TTVRDTRGSD (247 aa)) form the Radical SAM core domain. Cys-131 and Cys-375 are joined by a disulfide. [4Fe-4S] cluster contacts are provided by Cys-138, Cys-142, and Cys-145. S-adenosyl-L-methionine-binding positions include 196-197 (GE), Ser-230, 253-255 (SLH), and Asn-332. Cys-375 functions as the S-methylcysteine intermediate in the catalytic mechanism.

The protein belongs to the radical SAM superfamily. RlmN family. [4Fe-4S] cluster serves as cofactor.

The protein localises to the cytoplasm. The enzyme catalyses adenosine(2503) in 23S rRNA + 2 reduced [2Fe-2S]-[ferredoxin] + 2 S-adenosyl-L-methionine = 2-methyladenosine(2503) in 23S rRNA + 5'-deoxyadenosine + L-methionine + 2 oxidized [2Fe-2S]-[ferredoxin] + S-adenosyl-L-homocysteine. The catalysed reaction is adenosine(37) in tRNA + 2 reduced [2Fe-2S]-[ferredoxin] + 2 S-adenosyl-L-methionine = 2-methyladenosine(37) in tRNA + 5'-deoxyadenosine + L-methionine + 2 oxidized [2Fe-2S]-[ferredoxin] + S-adenosyl-L-homocysteine. In terms of biological role, specifically methylates position 2 of adenine 2503 in 23S rRNA and position 2 of adenine 37 in tRNAs. In Kocuria rhizophila (strain ATCC 9341 / DSM 348 / NBRC 103217 / DC2201), this protein is Probable dual-specificity RNA methyltransferase RlmN.